Here is a 164-residue protein sequence, read N- to C-terminus: MAKKNAKKSKNSSASIARNKRATFDYKFEEKMEAGLSLMGWEVKSIRMGKVNLSESYVFMREGEAFLFGCTIAPLNTASTHVVCDPMRSRKLLLKRKELDKLQGLVDRKGYSIVPISMYWQKGAWVKIEIGLGKGKKEHDKRDDTKDREWQIEKARTMKKAVQQ.

It belongs to the SmpB family.

The protein localises to the cytoplasm. Required for rescue of stalled ribosomes mediated by trans-translation. Binds to transfer-messenger RNA (tmRNA), required for stable association of tmRNA with ribosomes. tmRNA and SmpB together mimic tRNA shape, replacing the anticodon stem-loop with SmpB. tmRNA is encoded by the ssrA gene; the 2 termini fold to resemble tRNA(Ala) and it encodes a 'tag peptide', a short internal open reading frame. During trans-translation Ala-aminoacylated tmRNA acts like a tRNA, entering the A-site of stalled ribosomes, displacing the stalled mRNA. The ribosome then switches to translate the ORF on the tmRNA; the nascent peptide is terminated with the 'tag peptide' encoded by the tmRNA and targeted for degradation. The ribosome is freed to recommence translation, which seems to be the essential function of trans-translation. The sequence is that of SsrA-binding protein from Shewanella woodyi (strain ATCC 51908 / MS32).